The chain runs to 215 residues: Cytochrome b6 (215 aa).

A helical membrane pass occupies residues 32–52 (IFYCLGGITLVCFLIQFATGF). C35 provides a ligand contact to heme c. Heme b contacts are provided by H86 and H100. The next 3 helical transmembrane spans lie at 90–110 (ASMM…TGGF), 116–136 (LTWV…VTGY), and 186–206 (AHTF…FLMI). H187 and H202 together coordinate heme b.

Belongs to the cytochrome b family. PetB subfamily. In terms of assembly, the 4 large subunits of the cytochrome b6-f complex are cytochrome b6, subunit IV (17 kDa polypeptide, PetD), cytochrome f and the Rieske protein, while the 4 small subunits are PetG, PetL, PetM and PetN. The complex functions as a dimer. Requires heme b as cofactor. It depends on heme c as a cofactor.

Its subcellular location is the cellular thylakoid membrane. Component of the cytochrome b6-f complex, which mediates electron transfer between photosystem II (PSII) and photosystem I (PSI), cyclic electron flow around PSI, and state transitions. The chain is Cytochrome b6 from Nostoc punctiforme (strain ATCC 29133 / PCC 73102).